The following is a 240-amino-acid chain: Aquaporin Z (240 aa).

A run of 2 helical transmembrane segments spans residues 10–30 and 35–55; these read MIGTFWLTFAGCGSAVIAAGF and IGLVGVSLAFGLSVVTMAYAI. An NPA 1 motif is present at residues 64-66; it reads NPA. 3 helical membrane-spanning segments follow: residues 90-110, 131-151, and 160-180; these read VLGAIAAAALLYLIASGAAGF, LVACFVMEVVMTMMFLFVIMG, and GFAPLAIGLALVMIHLVSIPV. The short motif at 186–188 is the NPA 2 element; the sequence is NPA. A helical transmembrane segment spans residues 202–222; the sequence is IGQLWLFWVAPLLGGVLGGVI.

The protein belongs to the MIP/aquaporin (TC 1.A.8) family. As to quaternary structure, homotetramer.

It localises to the cell inner membrane. The catalysed reaction is H2O(in) = H2O(out). Its function is as follows. Channel that permits osmotically driven movement of water in both directions. It is involved in the osmoregulation and in the maintenance of cell turgor during volume expansion in rapidly growing cells. It mediates rapid entry or exit of water in response to abrupt changes in osmolarity. The chain is Aquaporin Z from Rhodopseudomonas palustris (strain ATCC BAA-98 / CGA009).